The primary structure comprises 1603 residues: Vitellogenin-5 (1603 aa).

Residues Met-1 to Ala-15 form the signal peptide. Residues Phe-24–Val-685 form the Vitellogenin domain. One can recognise a VWFD domain in the interval Ala-1306–Glu-1475. 2 disulfides stabilise this stretch: Cys-1308/Cys-1438 and Cys-1330/Cys-1474. The segment at Asn-1492–Lys-1513 is disordered.

In terms of processing, vitellogenin 5 undergoes little if any processing before being packaged into yolk platelets. In terms of tissue distribution, expressed in the intestine of adult hermaphrodites.

The protein localises to the secreted. Its function is as follows. Precursor of the egg-yolk proteins that are sources of nutrients during embryonic development. Together with other vitellogenins, may play a role in modulating life-span, acting via induction of autophagy and lysosomal lipolysis. The chain is Vitellogenin-5 (vit-5) from Caenorhabditis elegans.